A 284-amino-acid chain; its full sequence is Efem/EfeO family lipoprotein (284 aa).

The first 17 residues, 1–17 (MKKLTTLLLASTLLIAA), serve as a signal peptide directing secretion. Cysteine 18 carries the N-palmitoyl cysteine lipid modification. Cysteine 18 is lipidated: S-diacylglycerol cysteine.

It belongs to the EfeM/EfeO family.

Its subcellular location is the cell membrane. The chain is Efem/EfeO family lipoprotein from Staphylococcus aureus (strain USA300).